The primary structure comprises 293 residues: Bis(5'-nucleosyl)-tetraphosphatase, symmetrical (293 aa).

This sequence belongs to the Ap4A hydrolase family.

It carries out the reaction P(1),P(4)-bis(5'-adenosyl) tetraphosphate + H2O = 2 ADP + 2 H(+). Functionally, hydrolyzes diadenosine 5',5'''-P1,P4-tetraphosphate to yield ADP. The chain is Bis(5'-nucleosyl)-tetraphosphatase, symmetrical from Pseudomonas fluorescens (strain Pf0-1).